The chain runs to 373 residues: Leucoanthocyanidin dioxygenase 2 (373 aa).

One can recognise a Fe2OG dioxygenase domain in the interval 216–315 (LLLQLKINYY…RVSWVVFCEP (100 aa)). Residues His-240, Asp-242, and His-296 each contribute to the Fe cation site. Arg-306 provides a ligand contact to 2-oxoglutarate.

It belongs to the iron/ascorbate-dependent oxidoreductase family. L-ascorbate is required as a cofactor. Requires Fe(2+) as cofactor.

The catalysed reaction is a (2R,3S,4S)-leucoanthocyanidin + 2-oxoglutarate + O2 = a 4-H-anthocyanidin with a 3-hydroxy group + succinate + CO2 + 2 H2O. It participates in pigment biosynthesis; anthocyanin biosynthesis. Its function is as follows. Involved in anthocyanin and protoanthocyanidin biosynthesis by catalyzing the oxidation of leucoanthocyanidins into anthocyanidins. The protein is Leucoanthocyanidin dioxygenase 2 of Oryza sativa subsp. japonica (Rice).